The primary structure comprises 158 residues: Ecotin-like protein 2 (158 aa).

The protein belongs to the protease inhibitor I11 (ecotin) family.

In Leishmania major, this protein is Ecotin-like protein 2.